Here is a 314-residue protein sequence, read N- to C-terminus: Methionyl-tRNA formyltransferase (314 aa).

110 to 113 contacts (6S)-5,6,7,8-tetrahydrofolate; the sequence is SLLP.

The protein belongs to the Fmt family.

It carries out the reaction L-methionyl-tRNA(fMet) + (6R)-10-formyltetrahydrofolate = N-formyl-L-methionyl-tRNA(fMet) + (6S)-5,6,7,8-tetrahydrofolate + H(+). Attaches a formyl group to the free amino group of methionyl-tRNA(fMet). The formyl group appears to play a dual role in the initiator identity of N-formylmethionyl-tRNA by promoting its recognition by IF2 and preventing the misappropriation of this tRNA by the elongation apparatus. In Bacillus cereus (strain ATCC 14579 / DSM 31 / CCUG 7414 / JCM 2152 / NBRC 15305 / NCIMB 9373 / NCTC 2599 / NRRL B-3711), this protein is Methionyl-tRNA formyltransferase.